Consider the following 101-residue polypeptide: Small ribosomal subunit protein uS14 (101 aa).

The protein belongs to the universal ribosomal protein uS14 family. Part of the 30S ribosomal subunit. Contacts proteins S3 and S10.

Functionally, binds 16S rRNA, required for the assembly of 30S particles and may also be responsible for determining the conformation of the 16S rRNA at the A site. This chain is Small ribosomal subunit protein uS14, found in Sodalis glossinidius (strain morsitans).